Here is a 212-residue protein sequence, read N- to C-terminus: Major fimbrial subunit (212 aa).

The signal sequence occupies residues 1 to 18 (MKKTLLGSLILLAFATNA). Cys42 and Cys82 are oxidised to a cystine.

Belongs to the fimbrial protein family.

The protein localises to the fimbrium. Functionally, mediates adherence to oropharyngeal epithelial cells. Helps the airway colonization process. This Haemophilus influenzae protein is Major fimbrial subunit (hifA).